The primary structure comprises 201 residues: Holliday junction branch migration complex subunit RuvA (201 aa).

A domain I region spans residues 1–63; that stretch reads MYDYIKGTVT…EDNISLFGFQ (63 aa). Residues 64-142 are domain II; that stretch reads TTEERYLFKK…DVVASEIVYV (79 aa). The segment at 143–153 is flexible linker; the sequence is APENDMVAGLS. The interval 153–201 is domain III; that stretch reads SPQLEEAVLALEALGYSTRELKKVIPKLSKEEDLTSDAYIKLALQLMTK.

This sequence belongs to the RuvA family. As to quaternary structure, homotetramer. Forms an RuvA(8)-RuvB(12)-Holliday junction (HJ) complex. HJ DNA is sandwiched between 2 RuvA tetramers; dsDNA enters through RuvA and exits via RuvB. An RuvB hexamer assembles on each DNA strand where it exits the tetramer. Each RuvB hexamer is contacted by two RuvA subunits (via domain III) on 2 adjacent RuvB subunits; this complex drives branch migration. In the full resolvosome a probable DNA-RuvA(4)-RuvB(12)-RuvC(2) complex forms which resolves the HJ.

The protein resides in the cytoplasm. Its function is as follows. The RuvA-RuvB-RuvC complex processes Holliday junction (HJ) DNA during genetic recombination and DNA repair, while the RuvA-RuvB complex plays an important role in the rescue of blocked DNA replication forks via replication fork reversal (RFR). RuvA specifically binds to HJ cruciform DNA, conferring on it an open structure. The RuvB hexamer acts as an ATP-dependent pump, pulling dsDNA into and through the RuvAB complex. HJ branch migration allows RuvC to scan DNA until it finds its consensus sequence, where it cleaves and resolves the cruciform DNA. This chain is Holliday junction branch migration complex subunit RuvA, found in Listeria monocytogenes serotype 4b (strain CLIP80459).